Reading from the N-terminus, the 336-residue chain is D-erythrose-4-phosphate dehydrogenase (336 aa).

NAD(+) is bound by residues 11-12 (RI) and Arg80. Residues 153–155 (SCT), Arg199, 212–213 (TK), and Arg235 each bind substrate. Cys154 acts as the Nucleophile in catalysis. Asn317 is a binding site for NAD(+).

The protein belongs to the glyceraldehyde-3-phosphate dehydrogenase family. Epd subfamily. As to quaternary structure, homotetramer.

The protein localises to the cytoplasm. The catalysed reaction is D-erythrose 4-phosphate + NAD(+) + H2O = 4-phospho-D-erythronate + NADH + 2 H(+). The protein operates within cofactor biosynthesis; pyridoxine 5'-phosphate biosynthesis; pyridoxine 5'-phosphate from D-erythrose 4-phosphate: step 1/5. Its function is as follows. Catalyzes the NAD-dependent conversion of D-erythrose 4-phosphate to 4-phosphoerythronate. This is D-erythrose-4-phosphate dehydrogenase from Aeromonas hydrophila subsp. hydrophila (strain ATCC 7966 / DSM 30187 / BCRC 13018 / CCUG 14551 / JCM 1027 / KCTC 2358 / NCIMB 9240 / NCTC 8049).